Reading from the N-terminus, the 285-residue chain is Putative cysteine-rich repeat secretory protein 14 (285 aa).

Residues 1–30 (MSSFCLSKHLILVPILVMMAQLLLIRNVLS) form the signal peptide. Gnk2-homologous domains follow at residues 37–143 (YLYH…SIST) and 161–273 (RPNA…RYPF).

It belongs to the cysteine-rich repeat secretory protein family.

It is found in the secreted. The polypeptide is Putative cysteine-rich repeat secretory protein 14 (CRRSP14) (Arabidopsis thaliana (Mouse-ear cress)).